The following is a 111-amino-acid chain: MAKVYANANKVAARYVETRDAVRDERNKVTRRAKANLARQNSTTRITDEGYFPATITEQDGDVDFHTILNAPNALALEFGHAPSGFFAGTDTKPPEATYILTRAAIGGTVS.

This is Gene 21 protein (21) from Mycobacterium (Mycobacteriophage L5).